A 1393-amino-acid polypeptide reads, in one-letter code: DNA-directed RNA polymerase subunit beta (1393 aa).

This sequence belongs to the RNA polymerase beta chain family. In terms of assembly, the RNAP catalytic core consists of 2 alpha, 1 beta, 1 beta' and 1 omega subunit. When a sigma factor is associated with the core the holoenzyme is formed, which can initiate transcription.

The enzyme catalyses RNA(n) + a ribonucleoside 5'-triphosphate = RNA(n+1) + diphosphate. DNA-dependent RNA polymerase catalyzes the transcription of DNA into RNA using the four ribonucleoside triphosphates as substrates. The protein is DNA-directed RNA polymerase subunit beta of Rhodospirillum rubrum (strain ATCC 11170 / ATH 1.1.1 / DSM 467 / LMG 4362 / NCIMB 8255 / S1).